The following is a 94-amino-acid chain: Co-chaperonin GroES (94 aa).

This sequence belongs to the GroES chaperonin family. Heptamer of 7 subunits arranged in a ring. Interacts with the chaperonin GroEL.

It is found in the cytoplasm. Its function is as follows. Together with the chaperonin GroEL, plays an essential role in assisting protein folding. The GroEL-GroES system forms a nano-cage that allows encapsulation of the non-native substrate proteins and provides a physical environment optimized to promote and accelerate protein folding. GroES binds to the apical surface of the GroEL ring, thereby capping the opening of the GroEL channel. The polypeptide is Co-chaperonin GroES (Pediococcus pentosaceus (strain ATCC 25745 / CCUG 21536 / LMG 10740 / 183-1w)).